A 128-amino-acid polypeptide reads, in one-letter code: Small ribosomal subunit protein uS11 (128 aa).

Belongs to the universal ribosomal protein uS11 family. As to quaternary structure, part of the 30S ribosomal subunit. Interacts with proteins S7 and S18. Binds to IF-3.

Located on the platform of the 30S subunit, it bridges several disparate RNA helices of the 16S rRNA. Forms part of the Shine-Dalgarno cleft in the 70S ribosome. In Vesicomyosocius okutanii subsp. Calyptogena okutanii (strain HA), this protein is Small ribosomal subunit protein uS11.